The chain runs to 513 residues: ATP synthase subunit alpha (513 aa).

G169–T176 contributes to the ATP binding site.

The protein belongs to the ATPase alpha/beta chains family. As to quaternary structure, F-type ATPases have 2 components, CF(1) - the catalytic core - and CF(0) - the membrane proton channel. CF(1) has five subunits: alpha(3), beta(3), gamma(1), delta(1), epsilon(1). CF(0) has three main subunits: a(1), b(2) and c(9-12). The alpha and beta chains form an alternating ring which encloses part of the gamma chain. CF(1) is attached to CF(0) by a central stalk formed by the gamma and epsilon chains, while a peripheral stalk is formed by the delta and b chains.

The protein localises to the cell inner membrane. The catalysed reaction is ATP + H2O + 4 H(+)(in) = ADP + phosphate + 5 H(+)(out). Its function is as follows. Produces ATP from ADP in the presence of a proton gradient across the membrane. The alpha chain is a regulatory subunit. This Francisella tularensis subsp. tularensis (strain WY96-3418) protein is ATP synthase subunit alpha.